We begin with the raw amino-acid sequence, 429 residues long: Cyclin-B2-1 (429 aa).

The protein belongs to the cyclin family. Cyclin AB subfamily. Interacts with CDC20-1 and CDC20-2. In terms of tissue distribution, expressed in roots, stems, leaves, flowers and siliques.

This Arabidopsis thaliana (Mouse-ear cress) protein is Cyclin-B2-1 (CYCB2-1).